A 213-amino-acid polypeptide reads, in one-letter code: Sclerostin (213 aa).

The N-terminal stretch at 1-28 (MQLSLAPCLACLLVHAAFVAVESQGWQA) is a signal peptide. N-linked (GlcNAc...) asparagine glycosylation occurs at N53. 4 disulfides stabilise this stretch: C80–C134, C94–C148, C105–C165, and C109–C167. The CTCK domain occupies 82 to 172 (ELHYTRFVTD…ASCKCKRLTR (91 aa)). N-linked (GlcNAc...) asparagine glycosylation occurs at N175. Residues 178–213 (ELKDFGPETARPQKGRKPRPRARGAKANQAELENAY) are disordered. The segment covering 190–201 (QKGRKPRPRARG) has biased composition (basic residues).

This sequence belongs to the sclerostin family. As to quaternary structure, interacts with LRP4 (via the extracellular domain); the interaction facilitates the inhibition of Wnt signaling. Interacts with LRP5 (via the first two YWTD-EGF repeat domains); the interaction inhibits Wnt-mediated signaling. Interacts with LRP6.

It localises to the secreted. In terms of biological role, negative regulator of bone growth that acts through inhibition of Wnt signaling and bone formation. The polypeptide is Sclerostin (Rattus norvegicus (Rat)).